Reading from the N-terminus, the 732-residue chain is Elongation factor 2 (732 aa).

The tr-type G domain maps to 19-228; that stretch reads ELIRNIGIVA…TKITFKDIVE (210 aa). Residues 28 to 35, 94 to 98, and 148 to 151 each bind GTP; these read AHIDHGKT, DTPGH, and NKID. Diphthamide is present on His-598.

The protein belongs to the TRAFAC class translation factor GTPase superfamily. Classic translation factor GTPase family. EF-G/EF-2 subfamily.

The protein localises to the cytoplasm. Functionally, catalyzes the GTP-dependent ribosomal translocation step during translation elongation. During this step, the ribosome changes from the pre-translocational (PRE) to the post-translocational (POST) state as the newly formed A-site-bound peptidyl-tRNA and P-site-bound deacylated tRNA move to the P and E sites, respectively. Catalyzes the coordinated movement of the two tRNA molecules, the mRNA and conformational changes in the ribosome. The chain is Elongation factor 2 (fusA) from Thermoplasma acidophilum (strain ATCC 25905 / DSM 1728 / JCM 9062 / NBRC 15155 / AMRC-C165).